The sequence spans 439 residues: Glutamate-1-semialdehyde 2,1-aminomutase (439 aa).

An N6-(pyridoxal phosphate)lysine modification is found at Lys-273.

This sequence belongs to the class-III pyridoxal-phosphate-dependent aminotransferase family. HemL subfamily. In terms of assembly, homodimer. Pyridoxal 5'-phosphate serves as cofactor.

It localises to the cytoplasm. The catalysed reaction is (S)-4-amino-5-oxopentanoate = 5-aminolevulinate. It functions in the pathway porphyrin-containing compound metabolism; protoporphyrin-IX biosynthesis; 5-aminolevulinate from L-glutamyl-tRNA(Glu): step 2/2. In Paenarthrobacter aurescens (strain TC1), this protein is Glutamate-1-semialdehyde 2,1-aminomutase.